The chain runs to 217 residues: Elongation factor Ts (217 aa).

Positions 82-85 (TDFV) are involved in Mg(2+) ion dislocation from EF-Tu.

It belongs to the EF-Ts family.

The protein resides in the cytoplasm. Its function is as follows. Associates with the EF-Tu.GDP complex and induces the exchange of GDP to GTP. It remains bound to the aminoacyl-tRNA.EF-Tu.GTP complex up to the GTP hydrolysis stage on the ribosome. The protein is Elongation factor Ts of Synechococcus sp. (strain RCC307).